A 109-amino-acid polypeptide reads, in one-letter code: RNA-binding protein Hfq (109 aa).

Positions aspartate 9–valine 68 constitute a Sm domain.

The protein belongs to the Hfq family. Homohexamer.

In terms of biological role, RNA chaperone that binds small regulatory RNA (sRNAs) and mRNAs to facilitate mRNA translational regulation in response to envelope stress, environmental stress and changes in metabolite concentrations. Also binds with high specificity to tRNAs. The protein is RNA-binding protein Hfq of Francisella philomiragia subsp. philomiragia (strain ATCC 25017 / CCUG 19701 / FSC 153 / O#319-036).